The sequence spans 166 residues: Disulfide bond formation protein B (166 aa).

At 1–10 the chain is on the cytoplasmic side; that stretch reads MGLNITNRQG. Residues 11-27 form a helical membrane-spanning segment; that stretch reads FLLVAAACAGAIGFALF. Residues 28–45 lie on the Periplasmic side of the membrane; sequence AQYQLGEEPCPLCILQRI. Cysteine 37 and cysteine 40 are joined by a disulfide. The helical transmembrane segment at 46–62 threads the bilayer; it reads GVMAVGALALLAALHNP. Over 63–69 the chain is Cytoplasmic; the sequence is GKTGAKV. Residues 70-86 form a helical membrane-spanning segment; sequence WGGLMTLAALSGAGVSL. Topologically, residues 87 to 143 are periplasmic; it reads RQLWLQSLPADQVPQCGPGLEFLMESFPLWEVLSKVLKGSGECAAIQGRFLGMTMPF. Cysteine 102 and cysteine 129 are oxidised to a cystine. The chain crosses the membrane as a helical span at residues 144–162; sequence WVAVFFAGVIVWTLWLVGR. Residues 163 to 166 are Cytoplasmic-facing; sequence RRRG.

This sequence belongs to the DsbB family.

The protein resides in the cell inner membrane. Required for disulfide bond formation in some periplasmic proteins. Acts by oxidizing the DsbA protein. The protein is Disulfide bond formation protein B of Chromobacterium violaceum (strain ATCC 12472 / DSM 30191 / JCM 1249 / CCUG 213 / NBRC 12614 / NCIMB 9131 / NCTC 9757 / MK).